We begin with the raw amino-acid sequence, 417 residues long: Serine hydroxymethyltransferase (417 aa).

(6S)-5,6,7,8-tetrahydrofolate is bound by residues leucine 121 and 125–127; that span reads GHL. Lysine 229 is subject to N6-(pyridoxal phosphate)lysine. (6S)-5,6,7,8-tetrahydrofolate is bound at residue 355–357; that stretch reads SPF.

The protein belongs to the SHMT family. In terms of assembly, homodimer. Pyridoxal 5'-phosphate is required as a cofactor.

It localises to the cytoplasm. The catalysed reaction is (6R)-5,10-methylene-5,6,7,8-tetrahydrofolate + glycine + H2O = (6S)-5,6,7,8-tetrahydrofolate + L-serine. Its pathway is one-carbon metabolism; tetrahydrofolate interconversion. It functions in the pathway amino-acid biosynthesis; glycine biosynthesis; glycine from L-serine: step 1/1. In terms of biological role, catalyzes the reversible interconversion of serine and glycine with tetrahydrofolate (THF) serving as the one-carbon carrier. This reaction serves as the major source of one-carbon groups required for the biosynthesis of purines, thymidylate, methionine, and other important biomolecules. Also exhibits THF-independent aldolase activity toward beta-hydroxyamino acids, producing glycine and aldehydes, via a retro-aldol mechanism. This Shewanella baltica (strain OS223) protein is Serine hydroxymethyltransferase.